The sequence spans 456 residues: Adenylosuccinate synthetase isozyme 2 (456 aa).

A disordered region spans residues 1 to 24 (MAFAETYPAASSLPNGDCGRPRAR). GTP-binding positions include 39-45 (GDEGKGK) and 67-69 (GHT). Asp-40 functions as the Proton acceptor in the catalytic mechanism. Mg(2+) is bound by residues Asp-40 and Gly-67. Residue Asp-40 participates in substrate binding. IMP contacts are provided by residues 40 to 43 (DEGK), 65 to 68 (NAGH), Thr-162, Arg-176, Asn-255, Thr-270, and Arg-334. His-68 serves as the catalytic Proton donor. Position 330–336 (330–336 (VTTGRKR)) interacts with substrate. GTP contacts are provided by residues Arg-336, 362–364 (KLD), and 444–447 (GVGK).

This sequence belongs to the adenylosuccinate synthetase family. In terms of assembly, homodimer. Mg(2+) serves as cofactor.

The protein localises to the cytoplasm. Its subcellular location is the mitochondrion. The enzyme catalyses IMP + L-aspartate + GTP = N(6)-(1,2-dicarboxyethyl)-AMP + GDP + phosphate + 2 H(+). Its pathway is purine metabolism; AMP biosynthesis via de novo pathway; AMP from IMP: step 1/2. Its activity is regulated as follows. Inhibited competitively by AMP and IMP and non-competitively by fructose 1,6-bisphosphate. Functionally, plays an important role in the de novo pathway and in the salvage pathway of purine nucleotide biosynthesis. Catalyzes the first committed step in the biosynthesis of AMP from IMP. This chain is Adenylosuccinate synthetase isozyme 2, found in Homo sapiens (Human).